Consider the following 413-residue polypeptide: Arginine biosynthesis bifunctional protein ArgJ (413 aa).

6 residues coordinate substrate: Thr-163, Lys-189, Thr-200, Glu-286, Asn-408, and Thr-413. The active-site Nucleophile is the Thr-200.

It belongs to the ArgJ family. Heterotetramer of two alpha and two beta chains.

The protein resides in the cytoplasm. The enzyme catalyses N(2)-acetyl-L-ornithine + L-glutamate = N-acetyl-L-glutamate + L-ornithine. It carries out the reaction L-glutamate + acetyl-CoA = N-acetyl-L-glutamate + CoA + H(+). Its pathway is amino-acid biosynthesis; L-arginine biosynthesis; L-ornithine and N-acetyl-L-glutamate from L-glutamate and N(2)-acetyl-L-ornithine (cyclic): step 1/1. It functions in the pathway amino-acid biosynthesis; L-arginine biosynthesis; N(2)-acetyl-L-ornithine from L-glutamate: step 1/4. Functionally, catalyzes two activities which are involved in the cyclic version of arginine biosynthesis: the synthesis of N-acetylglutamate from glutamate and acetyl-CoA as the acetyl donor, and of ornithine by transacetylation between N(2)-acetylornithine and glutamate. The sequence is that of Arginine biosynthesis bifunctional protein ArgJ from Staphylococcus aureus (strain COL).